Here is a 175-residue protein sequence, read N- to C-terminus: ADP-ribosylation factor 6 (175 aa).

Gly-2 is lipidated: N-myristoyl glycine. Residue Lys-3 is the site of N6-myristoyl lysine attachment. GTP is bound by residues Ala-23 to Thr-28, Thr-41 to Thr-44, Asp-63 to Gln-67, Asn-122 to Asp-125, and Cys-155 to Ala-156.

Belongs to the small GTPase superfamily. Arf family.

The protein resides in the cytoplasm. It is found in the cytosol. It localises to the cell membrane. The protein localises to the endosome membrane. Its subcellular location is the recycling endosome membrane. The protein resides in the cell projection. It is found in the filopodium membrane. It localises to the ruffle. The protein localises to the cleavage furrow. Its subcellular location is the midbody. The protein resides in the midbody ring. It carries out the reaction GTP + H2O = GDP + phosphate + H(+). GTP-binding protein involved in protein trafficking; regulates endocytic recycling and cytoskeleton remodeling. May modulate vesicle budding and uncoating within the Golgi apparatus. May contribute to the regulation of dendritic branching, filopodia extension and dendritic spine development. This is ADP-ribosylation factor 6 (ARF6) from Gallus gallus (Chicken).